The primary structure comprises 66 residues: Xenoxin-3 (66 aa).

Intrachain disulfides connect C3–C24, C17–C37, C43–C58, and C59–C64.

As to expression, expressed by the skin dorsal glands.

It is found in the secreted. Functionally, lacks alpha-neurotoxic activity, has apparently no antibacterial activity, nor anti-coagulant potency. This chain is Xenoxin-3, found in Xenopus laevis (African clawed frog).